A 477-amino-acid chain; its full sequence is Bifunctional protein HldE (477 aa).

The tract at residues 1–318 (MKVTLPEFER…ENAVRGRAET (318 aa)) is ribokinase. An N6-acetyllysine modification is found at Lys-179. 195–198 (NLSE) serves as a coordination point for ATP. Asp-264 is a catalytic residue. The tract at residues 344 to 477 (MTNGVFDILH…IKKIQQDKKG (134 aa)) is cytidylyltransferase.

This sequence in the N-terminal section; belongs to the carbohydrate kinase PfkB family. The protein in the C-terminal section; belongs to the cytidylyltransferase family. Homodimer.

The catalysed reaction is D-glycero-beta-D-manno-heptose 7-phosphate + ATP = D-glycero-beta-D-manno-heptose 1,7-bisphosphate + ADP + H(+). The enzyme catalyses D-glycero-beta-D-manno-heptose 1-phosphate + ATP + H(+) = ADP-D-glycero-beta-D-manno-heptose + diphosphate. Its pathway is nucleotide-sugar biosynthesis; ADP-L-glycero-beta-D-manno-heptose biosynthesis; ADP-L-glycero-beta-D-manno-heptose from D-glycero-beta-D-manno-heptose 7-phosphate: step 1/4. It functions in the pathway nucleotide-sugar biosynthesis; ADP-L-glycero-beta-D-manno-heptose biosynthesis; ADP-L-glycero-beta-D-manno-heptose from D-glycero-beta-D-manno-heptose 7-phosphate: step 3/4. Catalyzes the phosphorylation of D-glycero-D-manno-heptose 7-phosphate at the C-1 position to selectively form D-glycero-beta-D-manno-heptose-1,7-bisphosphate. Its function is as follows. Catalyzes the ADP transfer from ATP to D-glycero-beta-D-manno-heptose 1-phosphate, yielding ADP-D-glycero-beta-D-manno-heptose. The protein is Bifunctional protein HldE of Shigella dysenteriae serotype 1 (strain Sd197).